The following is a 262-amino-acid chain: Tryptophan synthase alpha chain (262 aa).

Residues glutamate 49 and aspartate 60 each act as proton acceptor in the active site.

This sequence belongs to the TrpA family. Tetramer of two alpha and two beta chains.

It carries out the reaction (1S,2R)-1-C-(indol-3-yl)glycerol 3-phosphate + L-serine = D-glyceraldehyde 3-phosphate + L-tryptophan + H2O. It participates in amino-acid biosynthesis; L-tryptophan biosynthesis; L-tryptophan from chorismate: step 5/5. In terms of biological role, the alpha subunit is responsible for the aldol cleavage of indoleglycerol phosphate to indole and glyceraldehyde 3-phosphate. The protein is Tryptophan synthase alpha chain of Aquifex aeolicus (strain VF5).